A 57-amino-acid polypeptide reads, in one-letter code: Ribulose bisphosphate carboxylase large chain (57 aa).

Positions 1–2 (MS) are excised as a propeptide. An N-acetylproline modification is found at proline 3. At lysine 14 the chain carries N6,N6,N6-trimethyllysine.

This sequence belongs to the RuBisCO large chain family. Type I subfamily. Heterohexadecamer of 8 large chains and 8 small chains.

Its subcellular location is the plastid. The protein resides in the chloroplast. It carries out the reaction 2 (2R)-3-phosphoglycerate + 2 H(+) = D-ribulose 1,5-bisphosphate + CO2 + H2O. The enzyme catalyses D-ribulose 1,5-bisphosphate + O2 = 2-phosphoglycolate + (2R)-3-phosphoglycerate + 2 H(+). Its function is as follows. RuBisCO catalyzes two reactions: the carboxylation of D-ribulose 1,5-bisphosphate, the primary event in carbon dioxide fixation, as well as the oxidative fragmentation of the pentose substrate in the photorespiration process. Both reactions occur simultaneously and in competition at the same active site. This Camellia sinensis (Tea plant) protein is Ribulose bisphosphate carboxylase large chain (rbcL).